Consider the following 192-residue polypeptide: Ubiquitin-conjugating enzyme E2 T (192 aa).

Residues 2-152 (QRVSRLKREL…AKKWTEKHAL (151 aa)) form the UBC core domain. C86 acts as the Glycyl thioester intermediate in catalysis. The tract at residues 150–192 (HALPAPQGSDKESQEKSGSSEGTSHKRKSAEIAEESKKPCREP) is disordered. The segment covering 178–192 (SAEIAEESKKPCREP) has biased composition (basic and acidic residues).

Belongs to the ubiquitin-conjugating enzyme family.

It localises to the nucleus. It catalyses the reaction S-ubiquitinyl-[E1 ubiquitin-activating enzyme]-L-cysteine + [E2 ubiquitin-conjugating enzyme]-L-cysteine = [E1 ubiquitin-activating enzyme]-L-cysteine + S-ubiquitinyl-[E2 ubiquitin-conjugating enzyme]-L-cysteine.. It functions in the pathway protein modification; protein ubiquitination. In terms of biological role, accepts ubiquitin from the E1 complex and catalyzes its covalent attachment to other proteins. Catalyzes monoubiquitination. Involved in DNA repair. This is Ubiquitin-conjugating enzyme E2 T (ube2t) from Xenopus laevis (African clawed frog).